The chain runs to 159 residues: ATP synthase subunit b 2 (159 aa).

A helical membrane pass occupies residues 1–21 (MDATFWALIGLIIFLAILAYL).

This sequence belongs to the ATPase B chain family. In terms of assembly, F-type ATPases have 2 components, F(1) - the catalytic core - and F(0) - the membrane proton channel. F(1) has five subunits: alpha(3), beta(3), gamma(1), delta(1), epsilon(1). F(0) has three main subunits: a(1), b(2) and c(10-14). The alpha and beta chains form an alternating ring which encloses part of the gamma chain. F(1) is attached to F(0) by a central stalk formed by the gamma and epsilon chains, while a peripheral stalk is formed by the delta and b chains.

It is found in the cell inner membrane. In terms of biological role, f(1)F(0) ATP synthase produces ATP from ADP in the presence of a proton or sodium gradient. F-type ATPases consist of two structural domains, F(1) containing the extramembraneous catalytic core and F(0) containing the membrane proton channel, linked together by a central stalk and a peripheral stalk. During catalysis, ATP synthesis in the catalytic domain of F(1) is coupled via a rotary mechanism of the central stalk subunits to proton translocation. Functionally, component of the F(0) channel, it forms part of the peripheral stalk, linking F(1) to F(0). This is ATP synthase subunit b 2 from Brucella anthropi (strain ATCC 49188 / DSM 6882 / CCUG 24695 / JCM 21032 / LMG 3331 / NBRC 15819 / NCTC 12168 / Alc 37) (Ochrobactrum anthropi).